A 192-amino-acid polypeptide reads, in one-letter code: Adenylate kinase (192 aa).

Residue 12 to 17 (GSGKTT) coordinates ATP. The segment at 34–63 (STGDLLRAEVASGSELGQTIKSYIDNGNLV) is NMP. AMP-binding positions include Thr-35, Arg-40, 61-63 (NLV), 88-91 (GFPR), and Gln-95. The LID stretch occupies residues 130–136 (GRARGAD). Arg-131 provides a ligand contact to ATP. Positions 133 and 145 each coordinate AMP. Arg-173 contributes to the ATP binding site.

Belongs to the adenylate kinase family. Monomer.

It is found in the cytoplasm. The enzyme catalyses AMP + ATP = 2 ADP. Its pathway is purine metabolism; AMP biosynthesis via salvage pathway; AMP from ADP: step 1/1. Its function is as follows. Catalyzes the reversible transfer of the terminal phosphate group between ATP and AMP. Plays an important role in cellular energy homeostasis and in adenine nucleotide metabolism. The chain is Adenylate kinase from Nautilia profundicola (strain ATCC BAA-1463 / DSM 18972 / AmH).